The chain runs to 137 residues: Nucleoside diphosphate kinase (137 aa).

ATP-binding residues include K9, F57, R85, T91, R102, and N112. The active-site Pros-phosphohistidine intermediate is H115.

Belongs to the NDK family. As to quaternary structure, homotetramer. It depends on Mg(2+) as a cofactor.

The protein localises to the cytoplasm. It carries out the reaction a 2'-deoxyribonucleoside 5'-diphosphate + ATP = a 2'-deoxyribonucleoside 5'-triphosphate + ADP. The catalysed reaction is a ribonucleoside 5'-diphosphate + ATP = a ribonucleoside 5'-triphosphate + ADP. In terms of biological role, major role in the synthesis of nucleoside triphosphates other than ATP. The ATP gamma phosphate is transferred to the NDP beta phosphate via a ping-pong mechanism, using a phosphorylated active-site intermediate. This is Nucleoside diphosphate kinase from Campylobacter curvus (strain 525.92).